The primary structure comprises 651 residues: Maternal embryonic leucine zipper kinase (651 aa).

The region spanning 11-263 (YELHETIGTG…MKNLLNHPWI (253 aa)) is the Protein kinase domain. ATP-binding positions include 17–25 (IGTGGFAKV) and lysine 40. Position 56 is a phosphothreonine; by autocatalysis (threonine 56). Aspartate 132 functions as the Proton acceptor in the catalytic mechanism. Position 163 is a phosphotyrosine; by autocatalysis (tyrosine 163). Threonine 167 carries the phosphothreonine; by autocatalysis modification. Phosphoserine; by autocatalysis is present on residues serine 171 and serine 253. The UBA-like stretch occupies residues 282–321 (LDDDCVTELSVHHRNNRQTMEDLISLWQYDHLTATYLLLL). The autoinhibitory region stretch occupies residues 326-651 (RGKPVRLRLS…VEDILSSCKV (326 aa)). Phosphoserine; by autocatalysis occurs at positions 336, 343, and 356. The residue at position 367 (tyrosine 367) is a Phosphotyrosine. The residue at position 391 (serine 391) is a Phosphoserine; by autocatalysis. Threonine 398 is subject to Phosphothreonine; by autocatalysis. At serine 407 the chain carries Phosphoserine; by autocatalysis. Threonine 409 is modified (phosphothreonine). Serine 431 carries the phosphoserine; by autocatalysis modification. Phosphothreonine is present on threonine 478. Threonine 494 is subject to Phosphothreonine; by autocatalysis. Serine 498 is subject to Phosphoserine. The residue at position 505 (serine 505) is a Phosphoserine; by autocatalysis. Threonine 518 bears the Phosphothreonine mark. Serine 529 carries the post-translational modification Phosphoserine; by autocatalysis. Residue serine 529 is modified to Phosphoserine. At threonine 539 the chain carries Phosphothreonine; by autocatalysis. One can recognise a KA1 domain in the interval 602-651 (SDFGKVTMQFELEVCQLQKPDVVGIRRQRLKGDAWVYKRLVEDILSSCKV).

It belongs to the protein kinase superfamily. CAMK Ser/Thr protein kinase family. SNF1 subfamily. Monomer. Interacts with ZNF622 and PPP1R8. Post-translationally, autophosphorylated: autophosphorylation of the T-loop at Thr-167 and Ser-171 is required for activation. Thr-478 phosphorylation during mitosis promotes interaction with PPP1R8. In terms of tissue distribution, expressed in placenta, kidney, thymus, testis, ovary and intestine.

It localises to the cell membrane. The enzyme catalyses L-tyrosyl-[protein] + ATP = O-phospho-L-tyrosyl-[protein] + ADP + H(+). The catalysed reaction is L-seryl-[protein] + ATP = O-phospho-L-seryl-[protein] + ADP + H(+). It carries out the reaction L-threonyl-[protein] + ATP = O-phospho-L-threonyl-[protein] + ADP + H(+). Its activity is regulated as follows. Activated by autophosphorylation of the T-loop at Thr-167 and Ser-171: in contrast to other members of the SNF1 subfamily, phosphorylation at Thr-167 is not mediated by STK11/LKB1 but via autophosphorylation instead. Inhibited by calcium-binding. Kinase activity is also regulated by reducing agents: dithiothreitol (DTT) or reduced glutathione are required for kinase activity in vitro; such dependence is however not due to the presence of disulfide bonds. Its function is as follows. Serine/threonine-protein kinase involved in various processes such as cell cycle regulation, self-renewal of stem cells, apoptosis and splicing regulation. Has a broad substrate specificity; phosphorylates BCL2L14, CDC25B, MAP3K5/ASK1 and ZNF622. Acts as an activator of apoptosis by phosphorylating and activating MAP3K5/ASK1. Acts as a regulator of cell cycle, notably by mediating phosphorylation of CDC25B, promoting localization of CDC25B to the centrosome and the spindle poles during mitosis. Plays a key role in cell proliferation and carcinogenesis. Required for proliferation of embryonic and postnatal multipotent neural progenitors. Phosphorylates and inhibits BCL2L14, possibly leading to affect mammary carcinogenesis by mediating inhibition of the pro-apoptotic function of BCL2L14. Also involved in the inhibition of spliceosome assembly during mitosis by phosphorylating ZNF622, thereby contributing to its redirection to the nucleus. May also play a role in primitive hematopoiesis. The chain is Maternal embryonic leucine zipper kinase (MELK) from Homo sapiens (Human).